We begin with the raw amino-acid sequence, 132 residues long: Small ribosomal subunit protein uS13 (132 aa).

Positions 101-125 (RGLPVRGQRTKTNARTRKGPRKTVA) are enriched in basic residues. The disordered stretch occupies residues 101 to 132 (RGLPVRGQRTKTNARTRKGPRKTVANKKIETR).

It belongs to the universal ribosomal protein uS13 family. In terms of assembly, part of the 30S ribosomal subunit. Forms a loose heterodimer with protein S19. Forms two bridges to the 50S subunit in the 70S ribosome.

In terms of biological role, located at the top of the head of the 30S subunit, it contacts several helices of the 16S rRNA. In the 70S ribosome it contacts the 23S rRNA (bridge B1a) and protein L5 of the 50S subunit (bridge B1b), connecting the 2 subunits; these bridges are implicated in subunit movement. Contacts the tRNAs in the A and P-sites. This chain is Small ribosomal subunit protein uS13, found in Ureaplasma urealyticum serovar 10 (strain ATCC 33699 / Western).